The primary structure comprises 294 residues: Phosphatidylglycerol--prolipoprotein diacylglyceryl transferase (294 aa).

A run of 7 helical transmembrane segments spans residues 19 to 39, 69 to 89, 101 to 121, 139 to 159, 195 to 215, 224 to 244, and 267 to 287; these read VFGFDLALRWYALAYIVGIVL, LLTWVIVGVILGGRLGYVFFY, ILAVWQGGMAFHGGLLGVIAA, IMALGVPPGLLLGRIANFINA, QLYEAGLEGLILGALLIWLVW, GYVAGVFFAGYGVSRFFVEFF, and WGLTMGQCLSLPMILLGIWLI. R152 lines the a 1,2-diacyl-sn-glycero-3-phospho-(1'-sn-glycerol) pocket.

This sequence belongs to the Lgt family.

Its subcellular location is the cell inner membrane. The enzyme catalyses L-cysteinyl-[prolipoprotein] + a 1,2-diacyl-sn-glycero-3-phospho-(1'-sn-glycerol) = an S-1,2-diacyl-sn-glyceryl-L-cysteinyl-[prolipoprotein] + sn-glycerol 1-phosphate + H(+). Its pathway is protein modification; lipoprotein biosynthesis (diacylglyceryl transfer). Functionally, catalyzes the transfer of the diacylglyceryl group from phosphatidylglycerol to the sulfhydryl group of the N-terminal cysteine of a prolipoprotein, the first step in the formation of mature lipoproteins. The polypeptide is Phosphatidylglycerol--prolipoprotein diacylglyceryl transferase (Roseobacter denitrificans (strain ATCC 33942 / OCh 114) (Erythrobacter sp. (strain OCh 114))).